The sequence spans 155 residues: Ciliary microtubule inner protein 2C (155 aa).

Belongs to the CIMIP2 family.

The protein resides in the cytoplasm. Its subcellular location is the cytoskeleton. It localises to the cilium axoneme. In terms of biological role, microtubule inner protein (MIP) part of the dynein-decorated doublet microtubules (DMTs) in cilia axoneme, which is required for motile cilia beating. This is Ciliary microtubule inner protein 2C (cimip2cb) from Xenopus laevis (African clawed frog).